A 406-amino-acid polypeptide reads, in one-letter code: ATP synthase subunit a (406 aa).

Low complexity-rich tracts occupy residues 22–31 and 43–59; these read AGEHGAPAPE and DAAG…AEHG. Residues 22–76 form a disordered region; it reads AGEHGAPAPEVATPAEGHGARDAAGAATDPHGAAAEHGAAAHEDPAQHGAAGAEA. Helical transmembrane passes span 151–171, 209–229, 232–252, 278–298, 304–324, and 351–371; these read KHVV…FAAV, FVPY…FGLV, AATA…TFLI, LWPL…TKPF, LFAN…LIFA, and VQAY…VAHH. Residues 375–406 are disordered; sequence DEHEEHGHGAAATGGAHGSHGSHVAGASPGHG. A compositionally biased stretch (low complexity) spans 383–406; it reads GAAATGGAHGSHGSHVAGASPGHG.

It belongs to the ATPase A chain family. In terms of assembly, F-type ATPases have 2 components, CF(1) - the catalytic core - and CF(0) - the membrane proton channel. CF(1) has five subunits: alpha(3), beta(3), gamma(1), delta(1), epsilon(1). CF(0) has three main subunits: a(1), b(2) and c(9-12). The alpha and beta chains form an alternating ring which encloses part of the gamma chain. CF(1) is attached to CF(0) by a central stalk formed by the gamma and epsilon chains, while a peripheral stalk is formed by the delta and b chains.

Its subcellular location is the cell inner membrane. Functionally, key component of the proton channel; it plays a direct role in the translocation of protons across the membrane. The sequence is that of ATP synthase subunit a from Anaeromyxobacter sp. (strain Fw109-5).